The sequence spans 615 residues: Probable transporter mch1 (615 aa).

A disordered region spans residues 1-35 (MTGSIGQAPAIDKRDFDINRRSSTPHETAAQEDEA). The span at 11 to 20 (IDKRDFDINR) shows a compositional bias: basic and acidic residues. A helical transmembrane segment spans residues 84 to 104 (FVWGVITCLGAGSITAFSLYG). An N-linked (GlcNAc...) asparagine glycan is attached at Asn-112. Transmembrane regions (helical) follow at residues 120-140 (EVSI…GYLC), 147-167 (PLTL…AFVY), 182-202 (FWVM…MYLA), 218-238 (GIIL…QSQV), and 261-281 (FLFL…ALRI). Asn-329 carries an N-linked (GlcNAc...) asparagine glycan. Transmembrane regions (helical) follow at residues 371–391 (IFLA…VTGP), 428–448 (IIAL…DLFA), 477–497 (LAFL…LASP), 512–532 (LVGL…SVVW), 538–558 (GTNW…WGVI), and 583–603 (FGFW…AWLV).

This sequence belongs to the major facilitator superfamily.

It localises to the vacuole membrane. In terms of biological role, probable transporter. The chain is Probable transporter mch1 (mch1) from Emericella nidulans (strain FGSC A4 / ATCC 38163 / CBS 112.46 / NRRL 194 / M139) (Aspergillus nidulans).